Reading from the N-terminus, the 93-residue chain is MRILPISTIKGKLNEFVDAVSSTQDQITITKNGAPAAVLVGADEWESLQETLYWLAQPGIRESIAEADADIASGRTYGEDEIRAEFGVPRRPH.

This sequence belongs to the phD/YefM antitoxin family. Interacts with toxin RelG, which neutralizes the toxin. Also interacts with toxins RelE and RelK in vitro, in M.smegmatis coexpression with non-cognate toxins increases the toxicity of RelE but not of RelK.

In terms of biological role, antitoxin component of a type II toxin-antitoxin (TA) system. Upon expression in M.smegmatis neutralizes the effect of toxin RelE2. Induces its own promoter, in combination with RelG represses its own promoter. Has been seen to bind DNA in complex with toxin RelG but not alone. The sequence is that of Antitoxin RelF (relF) from Mycobacterium tuberculosis (strain ATCC 25618 / H37Rv).